A 458-amino-acid chain; its full sequence is tRNA modification GTPase MnmE (458 aa).

Residues arginine 22, glutamate 84, and arginine 123 each coordinate (6S)-5-formyl-5,6,7,8-tetrahydrofolate. Residues 220 to 379 form the TrmE-type G domain; the sequence is GIATAIIGRP…LEKAIADLFF (160 aa). A K(+)-binding site is contributed by asparagine 230. GTP contacts are provided by residues 230-235, 249-255, and 274-277; these read NVGKSS, TDIAGTT, and DTAG. Serine 234 is a binding site for Mg(2+). Residues threonine 249, isoleucine 251, and threonine 254 each coordinate K(+). Threonine 255 is a binding site for Mg(2+). Residue lysine 458 participates in (6S)-5-formyl-5,6,7,8-tetrahydrofolate binding.

The protein belongs to the TRAFAC class TrmE-Era-EngA-EngB-Septin-like GTPase superfamily. TrmE GTPase family. In terms of assembly, homodimer. Heterotetramer of two MnmE and two MnmG subunits. K(+) is required as a cofactor.

The protein localises to the cytoplasm. Exhibits a very high intrinsic GTPase hydrolysis rate. Involved in the addition of a carboxymethylaminomethyl (cmnm) group at the wobble position (U34) of certain tRNAs, forming tRNA-cmnm(5)s(2)U34. The polypeptide is tRNA modification GTPase MnmE (Bacillus cereus (strain ATCC 14579 / DSM 31 / CCUG 7414 / JCM 2152 / NBRC 15305 / NCIMB 9373 / NCTC 2599 / NRRL B-3711)).